We begin with the raw amino-acid sequence, 388 residues long: Succinate--CoA ligase [ADP-forming] subunit beta (388 aa).

The region spanning lysine 9–histidine 244 is the ATP-grasp domain. ATP is bound by residues lysine 46, glycine 53–glycine 55, glutamate 99, threonine 102, and glutamate 107. Mg(2+)-binding residues include asparagine 199 and aspartate 213. Substrate-binding positions include asparagine 264 and glycine 321–valine 323.

Belongs to the succinate/malate CoA ligase beta subunit family. In terms of assembly, heterotetramer of two alpha and two beta subunits. Requires Mg(2+) as cofactor.

It carries out the reaction succinate + ATP + CoA = succinyl-CoA + ADP + phosphate. The catalysed reaction is GTP + succinate + CoA = succinyl-CoA + GDP + phosphate. Its pathway is carbohydrate metabolism; tricarboxylic acid cycle; succinate from succinyl-CoA (ligase route): step 1/1. Functionally, succinyl-CoA synthetase functions in the citric acid cycle (TCA), coupling the hydrolysis of succinyl-CoA to the synthesis of either ATP or GTP and thus represents the only step of substrate-level phosphorylation in the TCA. The beta subunit provides nucleotide specificity of the enzyme and binds the substrate succinate, while the binding sites for coenzyme A and phosphate are found in the alpha subunit. This Shewanella oneidensis (strain ATCC 700550 / JCM 31522 / CIP 106686 / LMG 19005 / NCIMB 14063 / MR-1) protein is Succinate--CoA ligase [ADP-forming] subunit beta.